Consider the following 291-residue polypeptide: N-acetylmannosamine kinase (291 aa).

ATP contacts are provided by residues 5 to 12 (AIDIGGTK) and 132 to 139 (GVGGGVVC). H156, C166, C168, and C173 together coordinate Zn(2+).

The protein belongs to the ROK (NagC/XylR) family. NanK subfamily. In terms of assembly, homodimer.

The catalysed reaction is an N-acyl-D-mannosamine + ATP = an N-acyl-D-mannosamine 6-phosphate + ADP + H(+). Its pathway is amino-sugar metabolism; N-acetylneuraminate degradation; D-fructose 6-phosphate from N-acetylneuraminate: step 2/5. In terms of biological role, catalyzes the phosphorylation of N-acetylmannosamine (ManNAc) to ManNAc-6-P. This is N-acetylmannosamine kinase from Salmonella heidelberg (strain SL476).